Reading from the N-terminus, the 466-residue chain is tRNA-2-methylthio-N(6)-dimethylallyladenosine synthase (466 aa).

Residues 5 to 125 (RKLHIKSYGC…LPELLARAGR (121 aa)) enclose the MTTase N-terminal domain. The [4Fe-4S] cluster site is built by Cys-14, Cys-50, Cys-88, Cys-166, Cys-170, and Cys-173. A Radical SAM core domain is found at 152–384 (RARGVSAFVT…QSLIDSQQAA (233 aa)). The 63-residue stretch at 387-449 (KAAIGTVVDV…RYSLLGELVA (63 aa)) folds into the TRAM domain.

The protein belongs to the methylthiotransferase family. MiaB subfamily. In terms of assembly, monomer. The cofactor is [4Fe-4S] cluster.

It is found in the cytoplasm. The enzyme catalyses N(6)-dimethylallyladenosine(37) in tRNA + (sulfur carrier)-SH + AH2 + 2 S-adenosyl-L-methionine = 2-methylsulfanyl-N(6)-dimethylallyladenosine(37) in tRNA + (sulfur carrier)-H + 5'-deoxyadenosine + L-methionine + A + S-adenosyl-L-homocysteine + 2 H(+). In terms of biological role, catalyzes the methylthiolation of N6-(dimethylallyl)adenosine (i(6)A), leading to the formation of 2-methylthio-N6-(dimethylallyl)adenosine (ms(2)i(6)A) at position 37 in tRNAs that read codons beginning with uridine. In Bradyrhizobium sp. (strain BTAi1 / ATCC BAA-1182), this protein is tRNA-2-methylthio-N(6)-dimethylallyladenosine synthase.